Here is a 424-residue protein sequence, read N- to C-terminus: Serine--tRNA ligase (424 aa).

L-serine is bound at residue 233–235 (TAE). ATP is bound at residue 264-266 (RRE). Glu287 is a binding site for L-serine. 351–354 (EISS) is an ATP binding site. Ser387 provides a ligand contact to L-serine.

Belongs to the class-II aminoacyl-tRNA synthetase family. Type-1 seryl-tRNA synthetase subfamily. As to quaternary structure, homodimer. The tRNA molecule binds across the dimer.

It is found in the cytoplasm. It carries out the reaction tRNA(Ser) + L-serine + ATP = L-seryl-tRNA(Ser) + AMP + diphosphate + H(+). The enzyme catalyses tRNA(Sec) + L-serine + ATP = L-seryl-tRNA(Sec) + AMP + diphosphate + H(+). It participates in aminoacyl-tRNA biosynthesis; selenocysteinyl-tRNA(Sec) biosynthesis; L-seryl-tRNA(Sec) from L-serine and tRNA(Sec): step 1/1. Functionally, catalyzes the attachment of serine to tRNA(Ser). Is also able to aminoacylate tRNA(Sec) with serine, to form the misacylated tRNA L-seryl-tRNA(Sec), which will be further converted into selenocysteinyl-tRNA(Sec). This chain is Serine--tRNA ligase, found in Cyanothece sp. (strain PCC 7425 / ATCC 29141).